A 365-amino-acid chain; its full sequence is UDP-N-acetylglucosamine--N-acetylmuramyl-(pentapeptide) pyrophosphoryl-undecaprenol N-acetylglucosamine transferase (365 aa).

UDP-N-acetyl-alpha-D-glucosamine contacts are provided by residues 19–21 (TGG), N131, R170, S201, I255, 274–279 (ALTVTE), and Q300.

Belongs to the glycosyltransferase 28 family. MurG subfamily.

The protein localises to the cell inner membrane. It carries out the reaction di-trans,octa-cis-undecaprenyl diphospho-N-acetyl-alpha-D-muramoyl-L-alanyl-D-glutamyl-meso-2,6-diaminopimeloyl-D-alanyl-D-alanine + UDP-N-acetyl-alpha-D-glucosamine = di-trans,octa-cis-undecaprenyl diphospho-[N-acetyl-alpha-D-glucosaminyl-(1-&gt;4)]-N-acetyl-alpha-D-muramoyl-L-alanyl-D-glutamyl-meso-2,6-diaminopimeloyl-D-alanyl-D-alanine + UDP + H(+). The protein operates within cell wall biogenesis; peptidoglycan biosynthesis. Its function is as follows. Cell wall formation. Catalyzes the transfer of a GlcNAc subunit on undecaprenyl-pyrophosphoryl-MurNAc-pentapeptide (lipid intermediate I) to form undecaprenyl-pyrophosphoryl-MurNAc-(pentapeptide)GlcNAc (lipid intermediate II). The polypeptide is UDP-N-acetylglucosamine--N-acetylmuramyl-(pentapeptide) pyrophosphoryl-undecaprenol N-acetylglucosamine transferase (Acinetobacter baumannii (strain ATCC 17978 / DSM 105126 / CIP 53.77 / LMG 1025 / NCDC KC755 / 5377)).